Reading from the N-terminus, the 293-residue chain is 3-methyl-2-oxobutanoate hydroxymethyltransferase (293 aa).

Residues 1 to 29 (MTAAHDRSENQPGRPGGETTAPYGSAPRR) form a disordered region. 2 residues coordinate Mg(2+): Asp-73 and Asp-112. Residues 73–74 (DS), Asp-112, and Lys-142 contribute to the 3-methyl-2-oxobutanoate site. Glu-144 lines the Mg(2+) pocket. Catalysis depends on Glu-210, which acts as the Proton acceptor.

This sequence belongs to the PanB family. As to quaternary structure, homodecamer; pentamer of dimers. Mg(2+) serves as cofactor.

It localises to the cytoplasm. It carries out the reaction 3-methyl-2-oxobutanoate + (6R)-5,10-methylene-5,6,7,8-tetrahydrofolate + H2O = 2-dehydropantoate + (6S)-5,6,7,8-tetrahydrofolate. It functions in the pathway cofactor biosynthesis; (R)-pantothenate biosynthesis; (R)-pantoate from 3-methyl-2-oxobutanoate: step 1/2. Its function is as follows. Catalyzes the reversible reaction in which hydroxymethyl group from 5,10-methylenetetrahydrofolate is transferred onto alpha-ketoisovalerate to form ketopantoate. In Saccharopolyspora erythraea (strain ATCC 11635 / DSM 40517 / JCM 4748 / NBRC 13426 / NCIMB 8594 / NRRL 2338), this protein is 3-methyl-2-oxobutanoate hydroxymethyltransferase.